We begin with the raw amino-acid sequence, 374 residues long: Mitochondrial import inner membrane translocase subunit tim50 (374 aa).

The N-terminal 48 residues, 1–48 (MILNKVAKCYGKQIGFFGNKTTQFIKPNQTIFLIGGTKRLFTTQQQQS), are a transit peptide targeting the mitochondrion. Residues 42-97 (TTQQQQSPKKEEPKSEQQKKVEDKTEEKEKEKDEEENENEKEKENEDGEGQKKKSK) are disordered. 2 stretches are compositionally biased toward basic and acidic residues: residues 49 to 72 (PKKE…KEKE) and 81 to 93 (EKEK…EGQK). Residues 103–125 (IVTSVTSTFFAGVLVASTFGYLT) form a helical membrane-spanning segment. One can recognise an FCP1 homology domain in the interval 191-332 (PGGKKYTLVI…IELLPVLESF (142 aa)).

Belongs to the TIM50 family. Component of the mitochondrial import inner membrane translocase complex.

The protein resides in the mitochondrion inner membrane. In terms of biological role, component of the mitochondrial import inner membrane translocase that mediates the translocation of transit peptide-containing proteins across the mitochondrial inner membrane. The polypeptide is Mitochondrial import inner membrane translocase subunit tim50 (timm50) (Dictyostelium discoideum (Social amoeba)).